The sequence spans 238 residues: Ribosomal RNA small subunit methyltransferase I (238 aa).

This sequence belongs to the methyltransferase superfamily. RsmI family.

The protein resides in the cytoplasm. The catalysed reaction is cytidine(1402) in 16S rRNA + S-adenosyl-L-methionine = 2'-O-methylcytidine(1402) in 16S rRNA + S-adenosyl-L-homocysteine + H(+). Functionally, catalyzes the 2'-O-methylation of the ribose of cytidine 1402 (C1402) in 16S rRNA. The chain is Ribosomal RNA small subunit methyltransferase I from Mesomycoplasma conjunctivae (strain ATCC 25834 / NCTC 10147 / HRC/581) (Mycoplasma conjunctivae).